Reading from the N-terminus, the 601-residue chain is Coronin-like protein crn1 (601 aa).

5 WD repeats span residues 79–119 (GHTA…TVME), 132–172 (GHSR…AHVS), 174–213 (KMDV…PVSV), 220–260 (AKNP…EPIG), and 266–306 (DTGS…FHYL). 2 disordered regions span residues 361–386 (SDIY…KDAQ) and 407–540 (SATV…VEEK). 3 stretches are compositionally biased toward basic and acidic residues: residues 419-429 (KHNEEKVETPK), 437-453 (KPKE…EPEV), and 462-495 (KVEE…EKSF). Ser-500 and Ser-501 each carry phosphoserine. Basic and acidic residues predominate over residues 507 to 526 (EDVKKEPSEEKKLEVSDEAP). The residue at position 553 (Ser-553) is a Phosphoserine. Residues 556 to 600 (NLADLNKRFEGFEKRYEEELAIRDWKIAQLEDKLAKLTEAIKEKC) are a coiled coil.

It belongs to the WD repeat coronin family. In terms of assembly, binds to F-actin.

The protein is Coronin-like protein crn1 (crn1) of Schizosaccharomyces pombe (strain 972 / ATCC 24843) (Fission yeast).